The following is a 405-amino-acid chain: Na(+)-translocating NADH-quinone reductase subunit F (405 aa).

The chain crosses the membrane as a helical span at residues 3–23; it reads IILGIVMFTVIVLVLALMILF. Residues 32–124 enclose the 2Fe-2S ferredoxin-type domain; that stretch reads GDITIKVNGE…DMDIEVPEEV (93 aa). Residues cysteine 67, cysteine 73, cysteine 76, and cysteine 108 each contribute to the [2Fe-2S] cluster site. The FAD-binding FR-type domain maps to 127–267; sequence VKKWECTVIS…SGPFGEFFAK (141 aa).

This sequence belongs to the NqrF family. As to quaternary structure, composed of six subunits; NqrA, NqrB, NqrC, NqrD, NqrE and NqrF. [2Fe-2S] cluster serves as cofactor. FAD is required as a cofactor.

It localises to the cell inner membrane. It carries out the reaction a ubiquinone + n Na(+)(in) + NADH + H(+) = a ubiquinol + n Na(+)(out) + NAD(+). Its function is as follows. NQR complex catalyzes the reduction of ubiquinone-1 to ubiquinol by two successive reactions, coupled with the transport of Na(+) ions from the cytoplasm to the periplasm. The first step is catalyzed by NqrF, which accepts electrons from NADH and reduces ubiquinone-1 to ubisemiquinone by a one-electron transfer pathway. This chain is Na(+)-translocating NADH-quinone reductase subunit F, found in Neisseria meningitidis serogroup C / serotype 2a (strain ATCC 700532 / DSM 15464 / FAM18).